The chain runs to 822 residues: Cation/H(+) antiporter 3 (822 aa).

12 helical membrane passes run 55 to 75 (FPHL…LHFF), 116 to 136 (EIVF…LMGV), 150 to 170 (AITI…VIFF), 190 to 210 (YVVI…NLLF), 224 to 244 (ISSA…LIFM), 274 to 294 (IVVL…FYII), 305 to 325 (AIYL…ANWC), 331 to 351 (MGPF…SAII), 362 to 382 (FLPF…LFGW), 388 to 408 (IILI…VPAL), 418 to 438 (FALS…YALA), and 447 to 467 (ETFT…PPIL).

Belongs to the monovalent cation:proton antiporter 2 (CPA2) transporter (TC 2.A.37) family. CHX (TC 2.A.37.4) subfamily.

Its subcellular location is the membrane. Its function is as follows. May operate as a cation/H(+) antiporter. This Arabidopsis thaliana (Mouse-ear cress) protein is Cation/H(+) antiporter 3 (CHX3).